The following is a 516-amino-acid chain: MNATMQRSAVAGRTSGKVATTARASSMARPRLPIAGRVARRSAVTVRAVAEPVVVDKAVEAPAKPVPSGGDPWEDEKWTKYKWTVYRGVAYDLTPYLDRHPGGRWLLNLAIGRDATALFESYHLRPEVAASMLKRLPVLADFPVDAVPPSPRPNDSELYNAIRERVRKEVFKGTEIKGAHRSGSEGAAFAVLGYAAAMYALYTYDANPLTGALLGLGGAWIGLTIQHCGNHGAMSTNPVVNNLMGLTNDLAGGSSLMWRYHHQVSHHIHCNDDALDEDVFSAFPMLRFDDRLPKAWYHQFQHVYMWALFPFLQLVFQIGDWQALLTNRTVGATLYGASNFERQTLIAGKLAHYFLLYGLPAFLHGPTAMLGGAAGYLFTQSIVLAATFAVSHNVPETKPLDPGPTRENLDESAVTRDWGVQQVLTSANWGGVIGNFFTGGLNLQIEHHLFPAISFMHYPAISKIVADECKQRGIPYSHYDTLPEILGRFVRYMKEVGAAPQKPVKRDGEMLMLSKF.

The tract at residues 1 to 25 (MNATMQRSAVAGRTSGKVATTARAS) is disordered. The transit peptide at 1–47 (MNATMQRSAVAGRTSGKVATTARASSMARPRLPIAGRVARRSAVTVR) directs the protein to the chloroplast. The 66-residue stretch at 83–148 (WTVYRGVAYD…LADFPVDAVP (66 aa)) folds into the Cytochrome b5 heme-binding domain. Heme is bound by residues H100 and H123. 2 consecutive transmembrane segments (helical) span residues 186–206 (GAAF…TYDA) and 209–229 (LTGA…QHCG). A Histidine box-1 motif is present at residues 227 to 231 (HCGNH). The short motif at 262 to 267 (HQVSHH) is the Histidine box-2 element. The next 4 helical transmembrane spans lie at 305–325 (MWAL…QALL), 354–374 (FLLY…GGAA), 375–395 (GYLF…HNVP), and 423–443 (VLTS…GLNL). Residues 444–448 (QIEHH) carry the Histidine box-3 motif.

This sequence belongs to the fatty acid desaturase type 1 family. Requires Fe(2+) as cofactor.

The protein resides in the plastid. The protein localises to the chloroplast membrane. It carries out the reaction a (7Z,10Z,13Z,16Z,19Z)-docosapentaenoyl-containing glycerolipid + 2 Fe(II)-[cytochrome b5] + O2 + 2 H(+) = a (4Z,7Z,10Z,13Z,16Z,19Z)-docosahexaenoyl-containing glycerolipid + 2 Fe(III)-[cytochrome b5] + 2 H2O. It catalyses the reaction a (7Z,10Z,13Z,16Z)-docosatetraenoyl-containing glycerolipid + 2 Fe(II)-[cytochrome b5] + O2 + 2 H(+) = a (4Z,7Z,10Z,13Z,16Z)-docosapentaenoyl-containing glycerolipid + 2 Fe(III)-[cytochrome b5] + 2 H2O. In terms of biological role, fatty acid desaturase that introduces a cis double bond at the 4-position in 16-carbon polyunsaturated fatty acids that contain a Delta(7) double bond, resulting in the production of 16 carbon fatty acid (7Z,10Z,13Z)-hexadeca-7,10,13-trienoate. This Chlamydomonas reinhardtii (Chlamydomonas smithii) protein is Acyl-lipid (7-3)-desaturase, chloroplastic.